We begin with the raw amino-acid sequence, 155 residues long: Transcriptional repressor NrdR (155 aa).

Residues 3–34 fold into a zinc finger; it reads CPFCQHDDTQVLDTRVSEEGDSIRRRRRCTSC. One can recognise an ATP-cone domain in the interval 49–139; it reads PVVVKKNGSR…VYKSFEDVAE (91 aa).

This sequence belongs to the NrdR family. Zn(2+) is required as a cofactor.

In terms of biological role, negatively regulates transcription of bacterial ribonucleotide reductase nrd genes and operons by binding to NrdR-boxes. The sequence is that of Transcriptional repressor NrdR from Janthinobacterium sp. (strain Marseille) (Minibacterium massiliensis).